Consider the following 228-residue polypeptide: UPF0173 metal-dependent hydrolase lmo1577 (228 aa).

This sequence belongs to the UPF0173 family.

The protein is UPF0173 metal-dependent hydrolase lmo1577 of Listeria monocytogenes serovar 1/2a (strain ATCC BAA-679 / EGD-e).